Reading from the N-terminus, the 68-residue chain is Large ribosomal subunit protein uL29 (68 aa).

Belongs to the universal ribosomal protein uL29 family.

This is Large ribosomal subunit protein uL29 from Methanobrevibacter smithii (strain ATCC 35061 / DSM 861 / OCM 144 / PS).